The following is a 163-amino-acid chain: Photosystem II extrinsic protein V (163 aa).

The signal sequence occupies residues Met-1 to Ala-26. Heme c is bound by residues Cys-63, Cys-66, His-67, and Met-130.

The protein belongs to the cytochrome c family. PsbV subfamily. In terms of assembly, PSII is composed of 1 copy each of membrane proteins PsbA, PsbB, PsbC, PsbD, PsbE, PsbF, PsbH, PsbI, PsbJ, PsbK, PsbL, PsbM, PsbT, PsbY, PsbZ, Psb30/Ycf12, at least 3 peripheral proteins of the oxygen-evolving complex and a large number of cofactors. It forms dimeric complexes. Heme c serves as cofactor.

It is found in the plastid. The protein resides in the chloroplast thylakoid membrane. Its function is as follows. One of the extrinsic, lumenal subunits of photosystem II (PSII). PSII is a light-driven water plastoquinone oxidoreductase, using light energy to abstract electrons from H(2)O, generating a proton gradient subsequently used for ATP formation. The extrinsic proteins stabilize the structure of photosystem II oxygen-evolving complex (OEC), the ion environment of oxygen evolution and protect the OEC against heat-induced inactivation. The polypeptide is Photosystem II extrinsic protein V (Thalassiosira pseudonana (Marine diatom)).